The chain runs to 492 residues: Ketol-acid reductoisomerase (NADP(+)) (492 aa).

The KARI N-terminal Rossmann domain occupies 15 to 208 (AQLGKCRFMA…GGHRAGVLES (194 aa)). NADP(+)-binding positions include 45-48 (CGAQ), arginine 68, arginine 76, serine 78, and 108-110 (DKQ). Histidine 132 is an active-site residue. Position 158 (glycine 158) interacts with NADP(+). KARI C-terminal knotted domains lie at 209–344 (SFVA…TAAQ) and 345–485 (FEGK…MTDM). Mg(2+) contacts are provided by aspartate 217, glutamate 221, glutamate 389, and glutamate 393. Serine 414 contacts substrate.

The protein belongs to the ketol-acid reductoisomerase family. Requires Mg(2+) as cofactor.

The enzyme catalyses (2R)-2,3-dihydroxy-3-methylbutanoate + NADP(+) = (2S)-2-acetolactate + NADPH + H(+). The catalysed reaction is (2R,3R)-2,3-dihydroxy-3-methylpentanoate + NADP(+) = (S)-2-ethyl-2-hydroxy-3-oxobutanoate + NADPH + H(+). Its pathway is amino-acid biosynthesis; L-isoleucine biosynthesis; L-isoleucine from 2-oxobutanoate: step 2/4. It functions in the pathway amino-acid biosynthesis; L-valine biosynthesis; L-valine from pyruvate: step 2/4. In terms of biological role, involved in the biosynthesis of branched-chain amino acids (BCAA). Catalyzes an alkyl-migration followed by a ketol-acid reduction of (S)-2-acetolactate (S2AL) to yield (R)-2,3-dihydroxy-isovalerate. In the isomerase reaction, S2AL is rearranged via a Mg-dependent methyl migration to produce 3-hydroxy-3-methyl-2-ketobutyrate (HMKB). In the reductase reaction, this 2-ketoacid undergoes a metal-dependent reduction by NADPH to yield (R)-2,3-dihydroxy-isovalerate. This chain is Ketol-acid reductoisomerase (NADP(+)), found in Erwinia tasmaniensis (strain DSM 17950 / CFBP 7177 / CIP 109463 / NCPPB 4357 / Et1/99).